A 200-amino-acid polypeptide reads, in one-letter code: Glutathione S-transferase 1-1 (200 aa).

The 73-residue stretch at 1-73 (GSSPCRSVIM…YLVEKYGKTD (73 aa)) folds into the GST N-terminal domain. Glutathione is bound by residues S2, 43 to 45 (HTI), and 57 to 59 (ESR). In terms of domain architecture, GST C-terminal spans 79-200 (CPKKRAVINQ…AGCLEFKKYF (122 aa)).

It belongs to the GST superfamily. Theta family. Homodimer.

It catalyses the reaction RX + glutathione = an S-substituted glutathione + a halide anion + H(+). The catalysed reaction is 1,1,1-trichloro-2,2-bis(4-chlorophenyl)ethane = 1,1-dichloro-2,2-bis(4-chlorophenyl)ethylene + chloride + H(+). Its function is as follows. Conjugation of reduced glutathione to a wide number of exogenous and endogenous hydrophobic electrophiles. Has DDT dehydrochlorinase activity. The sequence is that of Glutathione S-transferase 1-1 (GstD1) from Drosophila teissieri (Fruit fly).